The sequence spans 94 residues: Protein FAM24B (94 aa).

Positions methionine 1 to cysteine 21 are cleaved as a signal peptide.

The protein belongs to the FAM24 family.

It localises to the secreted. The polypeptide is Protein FAM24B (FAM24B) (Homo sapiens (Human)).